Reading from the N-terminus, the 185-residue chain is Elongation factor P (185 aa).

It belongs to the elongation factor P family.

The protein resides in the cytoplasm. The protein operates within protein biosynthesis; polypeptide chain elongation. Involved in peptide bond synthesis. Stimulates efficient translation and peptide-bond synthesis on native or reconstituted 70S ribosomes in vitro. Probably functions indirectly by altering the affinity of the ribosome for aminoacyl-tRNA, thus increasing their reactivity as acceptors for peptidyl transferase. The polypeptide is Elongation factor P (Nitrosomonas europaea (strain ATCC 19718 / CIP 103999 / KCTC 2705 / NBRC 14298)).